A 370-amino-acid polypeptide reads, in one-letter code: ATP synthase gamma chain, chloroplastic (370 aa).

Residues 1-55 (MKFFCVAGLLASAAAFQAQPAAFTTYSPAVGGATSNVFSESSSPAHRNRRATIVM) constitute a chloroplast transit peptide. Cys145 is a catalytic residue.

It belongs to the ATPase gamma chain family. As to quaternary structure, F-type ATPases have 2 components, CF(1) - the catalytic core - and CF(0) - the membrane proton channel. CF(1) has five subunits: alpha(3), beta(3), gamma(1), delta(1), epsilon(1). CF(0) has four main subunits: a, b, b' and c.

Its subcellular location is the plastid. It is found in the chloroplast thylakoid membrane. In terms of biological role, produces ATP from ADP in the presence of a proton gradient across the membrane. The gamma chain is believed to be important in regulating ATPase activity and the flow of protons through the CF(0) complex. The sequence is that of ATP synthase gamma chain, chloroplastic (ATPC) from Trieres chinensis (Marine centric diatom).